Consider the following 127-residue polypeptide: MNQFRLKEIYIDGVPSESHLIQKEVTYMLSRKEVFEVHLNKKGRISFLYETQDGMEQYKIKLSMPEKKLSFQWFAWDGSSYVRMNTQNWLTKQIFFRFLKSTYFFKGKKQKMFLAEGKMKTKDKNRG.

As to quaternary structure, interacts with both the D1 and D2 domains of dynamin-like protein DynA.

The protein localises to the cell membrane. The chain is Protein YwpG (ywpG) from Bacillus subtilis (strain 168).